The following is a 446-amino-acid chain: Transcription factor Dp-2 (446 aa).

Residue threonine 2 is modified to N-acetylthreonine. Serine 24 carries the phosphoserine modification. The interval 60 to 82 (PQMIISTPQRLTSSGSVLIGSPY) is interaction with CEBPA. The Nuclear localization signal signature appears at 103–118 (GDRKRARKFIDSDFSE). Residue serine 122 is modified to Phosphoserine. A DNA-binding region spans residues 129–210 (GKGLRHFSMK…KKEIKWIGLP (82 aa)). Positions 176-210 (DQKNIRRRVYDALNVLMAMNIISKEKKEIKWIGLP) match the DEF box motif. The segment at 219 to 292 (NLEIEKQRRI…RKTVIDCSIS (74 aa)) is dimerization. The DCB1 stretch occupies residues 229-261 (ERIKQKRAQLQELLLQQIAFKNLVQRNRQNEQQ). The segment at 274–330 (LPFIIINTSRKTVIDCSISSDKFEYLFNFDNTFEIHDDIEVLKRMGMSFGLESGKCS) is DCB2. Positions 409–419 (SHQSSSAASHC) are enriched in low complexity. The disordered stretch occupies residues 409–446 (SHQSSSAASHCSESRGETPCSFNDEDEEDDEEDSSSPE). Residues 431-446 (NDEDEEDDEEDSSSPE) show a composition bias toward acidic residues.

The protein belongs to the E2F/DP family. As to quaternary structure, component of the DRTF1/E2F transcription factor complex. Forms heterodimers with E2F family members. The complex can interact with hypophosphorylated retinoblastoma protein RB1 and related proteins (RBL1 and RBL2) that inhibit the E2F transactivation domain. During the cell cycle, RB becomes phosphorylated in mid-to-late G1 phase, detaches from the DRTF1/E2F complex rendering E2F transcriptionally active. Viral oncoproteins, notably E1A, T-antigen and HPV E7, are capable of sequestering RB protein, thus releasing the active complex. Interacts with GMCL. Component of the DREAM complex (also named LINC complex) at least composed of E2F4, E2F5, LIN9, LIN37, LIN52, LIN54, MYBL1, MYBL2, RBL1, RBL2, RBBP4, TFDP1 and TFDP2. The complex exists in quiescent cells where it represses cell cycle-dependent genes. It dissociates in S phase when LIN9, LIN37, LIN52 and LIN54 form a subcomplex that binds to MYBL2. The complex TFDP2:E2F1 interacts with CEBPA; the interaction prevents CEBPA binding to target genes promoters and represses its transcriptional activity. Post-translationally, ser-24 is probably phosphorylated by CDK2. As to expression, high levels in heart and skeletal muscle. Also found in placenta, kidney, brain, lung and liver. The presence as well as the abundance of the different transcripts appear to vary significantly in different tissues and cell lines.

The protein resides in the nucleus. Its function is as follows. Can stimulate E2F-dependent transcription. Binds DNA cooperatively with E2F family members through the E2 recognition site, 5'-TTTC[CG]CGC-3', found in the promoter region of a number of genes whose products are involved in cell cycle regulation or in DNA replication. The TFDP2:E2F complex functions in the control of cell-cycle progression from G1 to S phase. The E2F1:DP complex appears to mediate both cell proliferation and apoptosis. Blocks adipocyte differentiation by repressing CEBPA binding to its target gene promoters. The sequence is that of Transcription factor Dp-2 (TFDP2) from Homo sapiens (Human).